Consider the following 83-residue polypeptide: Putative defensin-like protein 150 (83 aa).

A signal peptide spans 1–25 (MMGKHIQLSFAILIMFTIFVLGAVG). Cystine bridges form between Cys-35/Cys-83, Cys-44/Cys-64, Cys-49/Cys-77, and Cys-53/Cys-79.

It belongs to the DEFL family.

The protein resides in the secreted. The protein is Putative defensin-like protein 150 (LCR32) of Arabidopsis thaliana (Mouse-ear cress).